The chain runs to 121 residues: Large ribosomal subunit protein bL12 (121 aa).

The protein belongs to the bacterial ribosomal protein bL12 family. As to quaternary structure, homodimer. Part of the ribosomal stalk of the 50S ribosomal subunit. Forms a multimeric L10(L12)X complex, where L10 forms an elongated spine to which 2 to 4 L12 dimers bind in a sequential fashion. Binds GTP-bound translation factors.

Its function is as follows. Forms part of the ribosomal stalk which helps the ribosome interact with GTP-bound translation factors. Is thus essential for accurate translation. This is Large ribosomal subunit protein bL12 from Bacillus pumilus (strain SAFR-032).